The following is a 479-amino-acid chain: Aspartyl/glutamyl-tRNA(Asn/Gln) amidotransferase subunit B (479 aa).

It belongs to the GatB/GatE family. GatB subfamily. Heterotrimer of A, B and C subunits.

The catalysed reaction is L-glutamyl-tRNA(Gln) + L-glutamine + ATP + H2O = L-glutaminyl-tRNA(Gln) + L-glutamate + ADP + phosphate + H(+). It catalyses the reaction L-aspartyl-tRNA(Asn) + L-glutamine + ATP + H2O = L-asparaginyl-tRNA(Asn) + L-glutamate + ADP + phosphate + 2 H(+). Allows the formation of correctly charged Asn-tRNA(Asn) or Gln-tRNA(Gln) through the transamidation of misacylated Asp-tRNA(Asn) or Glu-tRNA(Gln) in organisms which lack either or both of asparaginyl-tRNA or glutaminyl-tRNA synthetases. The reaction takes place in the presence of glutamine and ATP through an activated phospho-Asp-tRNA(Asn) or phospho-Glu-tRNA(Gln). The polypeptide is Aspartyl/glutamyl-tRNA(Asn/Gln) amidotransferase subunit B (Geotalea daltonii (strain DSM 22248 / JCM 15807 / FRC-32) (Geobacter daltonii)).